A 275-amino-acid chain; its full sequence is Exosome complex component RRP40 (275 aa).

Alanine 2 carries the N-acetylalanine modification. Lysine 151 is covalently cross-linked (Glycyl lysine isopeptide (Lys-Gly) (interchain with G-Cter in SUMO2)).

Belongs to the RRP40 family. Component of the RNA exosome core complex (Exo-9), composed of EXOSC1, EXOSC2, EXOSC3, EXOSC4, EXOSC5, EXOSC6, EXOSC7, EXOSC8 and EXOSC9; within the complex interacts with EXOSC5 and EXOSC9. The catalytically inactive RNA exosome core complex (Exo-9) associates with the catalytic subunit EXOSC10/RRP6. Exo-9 may associate with DIS3 to form the nucleolar exosome complex, or DIS3L to form the cytoplasmic exosome complex. Exo-9 is formed by a hexameric base ring consisting of the heterodimers EXOSC4-EXOSC9, EXOSC5-EXOSC8 and EXOSC6-EXOSC7, and a cap ring consisting of EXOSC1, EXOSC2 and EXOSC3. The RNA exosome complex associates with cofactors C1D/RRP47, MPHOSPH6/MPP6 and MTREX/MTR4. Interacts with MPHOSPH6/MPP6; the interaction is direct. Interacts with GTPBP1. Interacts with ZC3HAV1. Interacts with DDX17 only in the presence of ZC3HAV1 in an RNA-independent manner. Interacts with DHX36; this interaction occurs in a RNase-insensitive manner. Interacts with HBS1L isoform 2.

The protein resides in the cytoplasm. Its subcellular location is the nucleus. It is found in the nucleolus. Non-catalytic component of the RNA exosome complex which has 3'-&gt;5' exoribonuclease activity and participates in a multitude of cellular RNA processing and degradation events. In the nucleus, the RNA exosome complex is involved in proper maturation of stable RNA species such as rRNA, snRNA and snoRNA, in the elimination of RNA processing by-products and non-coding 'pervasive' transcripts, such as antisense RNA species and promoter-upstream transcripts (PROMPTs), and of mRNAs with processing defects, thereby limiting or excluding their export to the cytoplasm. The RNA exosome may be involved in Ig class switch recombination (CSR) and/or Ig variable region somatic hypermutation (SHM) by targeting AICDA deamination activity to transcribed dsDNA substrates. In the cytoplasm, the RNA exosome complex is involved in general mRNA turnover and specifically degrades inherently unstable mRNAs containing AU-rich elements (AREs) within their 3' untranslated regions, and in RNA surveillance pathways, preventing translation of aberrant mRNAs. It seems to be involved in degradation of histone mRNA. The catalytic inactive RNA exosome core complex of 9 subunits (Exo-9) is proposed to play a pivotal role in the binding and presentation of RNA for ribonucleolysis, and to serve as a scaffold for the association with catalytic subunits and accessory proteins or complexes. EXOSC3 as peripheral part of the Exo-9 complex stabilizes the hexameric ring of RNase PH-domain subunits through contacts with EXOSC9 and EXOSC5. The polypeptide is Exosome complex component RRP40 (EXOSC3) (Bos taurus (Bovine)).